Consider the following 332-residue polypeptide: Probable cytosolic iron-sulfur protein assembly protein 1 (332 aa).

WD repeat units lie at residues 9-48, 52-93, 98-137, 144-183, 188-230, 257-295, and 302-332; these read GHTD…LVTT, GHNR…WQFL, GHEN…DEFE, DHTQ…WICV, GHES…GGTG, AHTR…QWVV, and AHGV…IWEV.

The protein belongs to the WD repeat CIA1 family. In terms of assembly, interacts with NAR1.

It localises to the cytoplasm. Its subcellular location is the nucleus. Functionally, essential component of the cytosolic iron-sulfur (Fe/S) protein assembly machinery. Required for the maturation of extramitochondrial Fe/S proteins. The sequence is that of Probable cytosolic iron-sulfur protein assembly protein 1 from Yarrowia lipolytica (strain CLIB 122 / E 150) (Yeast).